Here is a 337-residue protein sequence, read N- to C-terminus: Putative 2-aminoethylphosphonate-binding periplasmic protein (337 aa).

Residues 1-21 (MKLSRLALLSVFALASAPSWA) form the signal peptide.

It belongs to the bacterial solute-binding protein 1 family.

It is found in the periplasm. Its function is as follows. Probably part of the PhnSTUV complex (TC 3.A.1.11.5) involved in 2-aminoethylphosphonate import. This Salmonella typhimurium (strain LT2 / SGSC1412 / ATCC 700720) protein is Putative 2-aminoethylphosphonate-binding periplasmic protein (phnS).